The following is a 67-amino-acid chain: Conotoxin Cal6.35 (67 aa).

Positions 1–22 are cleaved as a signal peptide; the sequence is MKLTCVLIVAVLILTACQVIAA. 3 cysteine pairs are disulfide-bonded: Cys-43–Cys-53, Cys-46–Cys-59, and Cys-52–Cys-66.

The protein belongs to the conotoxin O1 superfamily. In terms of tissue distribution, expressed by the venom duct.

Its subcellular location is the secreted. Probable neurotoxin. In Californiconus californicus (California cone), this protein is Conotoxin Cal6.35.